A 231-amino-acid polypeptide reads, in one-letter code: Antiholin-like protein LrgB (231 aa).

5 helical membrane-spanning segments follow: residues 7-24 (PYFG…GTFL), 34-56 (FTPL…FSYA), 91-113 (WWQI…YLLA), 149-171 (ITAF…FLKV), and 207-229 (ASIA…VQLI).

Belongs to the CidB/LrgB family. LrgB subfamily.

It localises to the cell membrane. Its function is as follows. Inhibits the expression or activity of extracellular murein hydrolases by interacting, possibly with LrgA, with the holin-like protein CidA. The LrgAB and CidA proteins may affect the proton motive force of the membrane. May be involved in programmed cell death (PCD), possibly triggering PCD in response to antibiotics and environmental stresses. This Bacillus subtilis (strain 168) protein is Antiholin-like protein LrgB.